The primary structure comprises 365 residues: Embryonic developmental protein tofu-6 (365 aa).

An RRM domain is found at Ala13–Asn90.

Required maternally for early embryonic cell divisions. May have a role in DNA replication. This is Embryonic developmental protein tofu-6 from Caenorhabditis briggsae.